The chain runs to 153 residues: D-aminoacyl-tRNA deacylase (153 aa).

The short motif at 142 to 143 (GP) is the Gly-cisPro motif, important for rejection of L-amino acids element.

The protein belongs to the DTD family. As to quaternary structure, homodimer.

The protein resides in the cytoplasm. It carries out the reaction glycyl-tRNA(Ala) + H2O = tRNA(Ala) + glycine + H(+). It catalyses the reaction a D-aminoacyl-tRNA + H2O = a tRNA + a D-alpha-amino acid + H(+). In terms of biological role, an aminoacyl-tRNA editing enzyme that deacylates mischarged D-aminoacyl-tRNAs. Also deacylates mischarged glycyl-tRNA(Ala), protecting cells against glycine mischarging by AlaRS. Acts via tRNA-based rather than protein-based catalysis; rejects L-amino acids rather than detecting D-amino acids in the active site. By recycling D-aminoacyl-tRNA to D-amino acids and free tRNA molecules, this enzyme counteracts the toxicity associated with the formation of D-aminoacyl-tRNA entities in vivo and helps enforce protein L-homochirality. The chain is D-aminoacyl-tRNA deacylase from Acidovorax ebreus (strain TPSY) (Diaphorobacter sp. (strain TPSY)).